Here is a 524-residue protein sequence, read N- to C-terminus: Peptide chain release factor 3 (524 aa).

The region spanning 9-275 (SRRRTFAIIS…AVVDLSPPPI (267 aa)) is the tr-type G domain. GTP is bound by residues 18-25 (SHPDAGKT), 86-90 (DTPGH), and 140-143 (NKLD).

Belongs to the TRAFAC class translation factor GTPase superfamily. Classic translation factor GTPase family. PrfC subfamily.

Its subcellular location is the cytoplasm. Its function is as follows. Increases the formation of ribosomal termination complexes and stimulates activities of RF-1 and RF-2. It binds guanine nucleotides and has strong preference for UGA stop codons. It may interact directly with the ribosome. The stimulation of RF-1 and RF-2 is significantly reduced by GTP and GDP, but not by GMP. The polypeptide is Peptide chain release factor 3 (Dechloromonas aromatica (strain RCB)).